We begin with the raw amino-acid sequence, 664 residues long: UvrABC system protein B (664 aa).

Residues 25–182 form the Helicase ATP-binding domain; the sequence is KSFGEGKNKI…RKFLHIQYAR (158 aa). An ATP-binding site is contributed by 38–45; sequence GVTGSGKT. A Beta-hairpin motif is present at residues 91-114; that stretch reads YYDYYQPEAYVPSSDTFIEKDMSM. One can recognise a Helicase C-terminal domain in the interval 429–595; the sequence is QIEDLLNEIR…TIQKEIHDIL (167 aa). In terms of domain architecture, UVR spans 625 to 660; sequence DKLREALKREMLRYANDMDFEKAAMFRDKMLALGPD.

Belongs to the UvrB family. In terms of assembly, forms a heterotetramer with UvrA during the search for lesions. Interacts with UvrC in an incision complex.

The protein resides in the cytoplasm. In terms of biological role, the UvrABC repair system catalyzes the recognition and processing of DNA lesions. A damage recognition complex composed of 2 UvrA and 2 UvrB subunits scans DNA for abnormalities. Upon binding of the UvrA(2)B(2) complex to a putative damaged site, the DNA wraps around one UvrB monomer. DNA wrap is dependent on ATP binding by UvrB and probably causes local melting of the DNA helix, facilitating insertion of UvrB beta-hairpin between the DNA strands. Then UvrB probes one DNA strand for the presence of a lesion. If a lesion is found the UvrA subunits dissociate and the UvrB-DNA preincision complex is formed. This complex is subsequently bound by UvrC and the second UvrB is released. If no lesion is found, the DNA wraps around the other UvrB subunit that will check the other stand for damage. This chain is UvrABC system protein B, found in Leptospira biflexa serovar Patoc (strain Patoc 1 / Ames).